The following is a 266-amino-acid chain: DNA damage-regulated autophagy modulator protein 2 (266 aa).

The next 6 helical transmembrane spans lie at 8–28 (LSFLPSALVIWTAAAFIFSYI), 53–73 (KCLFGAMLNIAAVLCVATIYV), 92–112 (NKAGLVLGLLSCLGLSLVANF), 117–137 (FFAVHVCGAVLTFGMGSLYMF), 160–180 (LLLVIWCGVSAFSMLTCSSLL), and 207–227 (ITTAAEWSMSLSFFGFFLTYI).

It belongs to the DRAM/TMEM150 family.

Its subcellular location is the lysosome membrane. The protein resides in the photoreceptor inner segment. It is found in the apical cell membrane. Plays a role in the initiation of autophagy. In the retina, might be involved in the process of photoreceptor cells renewal and recycling to preserve visual function. Induces apoptotic cell death when coexpressed with DRAM1. The chain is DNA damage-regulated autophagy modulator protein 2 (DRAM2) from Bos taurus (Bovine).